The primary structure comprises 502 residues: Maturase K (502 aa).

The protein belongs to the intron maturase 2 family. MatK subfamily.

It localises to the plastid. It is found in the chloroplast. Its function is as follows. Usually encoded in the trnK tRNA gene intron. Probably assists in splicing its own and other chloroplast group II introns. The chain is Maturase K from Brassica oleracea (Wild cabbage).